Reading from the N-terminus, the 795-residue chain is Mitochondrial intermediate peptidase (795 aa).

The N-terminal 22 residues, 1-22, are a transit peptide targeting the mitochondrion; sequence MLKTLNRRSWTCRQCIRILRRN. His-561 contacts Zn(2+). Glu-562 is a catalytic residue. Residues His-565 and His-568 each coordinate Zn(2+).

Belongs to the peptidase M3 family. Zn(2+) is required as a cofactor.

It localises to the mitochondrion matrix. The catalysed reaction is Release of an N-terminal octapeptide as second stage of processing of some proteins imported into the mitochondrion.. Its function is as follows. Cleaves proteins, imported into the mitochondrion, to their mature size. While most mitochondrial precursor proteins are processed to the mature form in one step by mitochondrial processing peptidase (MPP), the sequential cleavage by MIP of an octapeptide after initial processing by MPP is a required step for a subgroup of nuclear-encoded precursor proteins destined for the matrix or the inner membrane. In Coccidioides immitis (strain RS) (Valley fever fungus), this protein is Mitochondrial intermediate peptidase (OCT1).